Reading from the N-terminus, the 202-residue chain is Putative transposon Tn552 DNA-invertase bin3 (202 aa).

The Resolvase/invertase-type recombinase catalytic domain maps to 1 to 143 (MIIGYARVSS…QGIQVAKEKG (143 aa)). Ser-9 acts as the O-(5'-phospho-DNA)-serine intermediate in catalysis.

The protein belongs to the site-specific recombinase resolvase family.

Its function is as follows. Potential DNA invertase. The chain is Putative transposon Tn552 DNA-invertase bin3 (bin3) from Staphylococcus aureus.